Reading from the N-terminus, the 418-residue chain is tRNA-2-methylthio-N(6)-dimethylallyladenosine synthase (418 aa).

The MTTase N-terminal domain occupies 2–118; that stretch reads PGYYLWTIGC…WREIPEGFIL (117 aa). Positions 11, 47, 81, 134, 138, and 141 each coordinate [4Fe-4S] cluster. Residues 120-351 enclose the Radical SAM core domain; sequence LRPPVSANVT…EDLQKETVGK (232 aa). The TRAM domain occupies 346–414; the sequence is KETVGKANAA…PWSLQAKLVN (69 aa).

The protein belongs to the methylthiotransferase family. MiaB subfamily. As to quaternary structure, monomer. The cofactor is [4Fe-4S] cluster.

Its subcellular location is the cytoplasm. It carries out the reaction N(6)-dimethylallyladenosine(37) in tRNA + (sulfur carrier)-SH + AH2 + 2 S-adenosyl-L-methionine = 2-methylsulfanyl-N(6)-dimethylallyladenosine(37) in tRNA + (sulfur carrier)-H + 5'-deoxyadenosine + L-methionine + A + S-adenosyl-L-homocysteine + 2 H(+). Its function is as follows. Catalyzes the methylthiolation of N6-(dimethylallyl)adenosine (i(6)A), leading to the formation of 2-methylthio-N6-(dimethylallyl)adenosine (ms(2)i(6)A) at position 37 in tRNAs that read codons beginning with uridine. The chain is tRNA-2-methylthio-N(6)-dimethylallyladenosine synthase from Dehalococcoides mccartyi (strain ATCC BAA-2100 / JCM 16839 / KCTC 5957 / BAV1).